The sequence spans 494 residues: Protein transport protein Sec61 subunit alpha (494 aa).

10 helical membrane-spanning segments follow: residues 36–56 (LWTS…LYGI), 79–99 (LMEL…LLAG), 122–142 (LLGI…GMYG), 147–167 (LGAG…IIVI), 177–197 (YGIG…SIVW), 249–269 (LLAT…QVEL), 294–314 (MPII…QILY), 359–379 (IVSD…SCAL), 426–446 (AAFG…MGAI), and 450–470 (TGIL…LLAV).

Belongs to the SecY/SEC61-alpha family. In terms of assembly, heterotrimeric complex composed of SEC61-alpha, SEC61-beta and SEC61-gamma.

The protein localises to the endoplasmic reticulum membrane. Functionally, appears to play a crucial role in the insertion of secretory and membrane polypeptides into the ER. It is required for assembly of membrane and secretory proteins. The polypeptide is Protein transport protein Sec61 subunit alpha (Pyrenomonas salina).